Reading from the N-terminus, the 209-residue chain is Lysine-rich arabinogalactan protein 18 (209 aa).

The N-terminal stretch at 1-21 (MDRNFLLTVTLICIVVAGVGG) is a signal peptide. A disordered region spans residues 21 to 185 (GQSPISSPTK…PSADDQSGAA (165 aa)). A compositionally biased stretch (low complexity) spans 23-79 (SPISSPTKSPTTPSAPTTSPTKSPAVTSPTTAPAKTPTASASSPVESPKSPAPVSES). 2 stretches are compositionally biased toward pro residues: residues 80–95 (SPPPTPVPESSPPVPA) and 103–119 (SSPPVPAPVADSPPAPV). A compositionally biased stretch (basic residues) spans 132–145 (SKHKKTTKKSKKHQ). A compositionally biased stretch (pro residues) spans 149–164 (APAPELLGPPAPPTES). G183 carries GPI-anchor amidated glycine lipidation. Residues 184–209 (AASTRVLRNVAVGAVATAWAVLVMAF) constitute a propeptide, removed in mature form.

This sequence belongs to the lysine-rich AGP family. O-glycosylated on the hydroxyproline residues. Predominantly expressed in flowers, and moderately expressed in roots, stems and young leaves.

The protein localises to the cell membrane. Its function is as follows. Proteoglycan that seems to be implicated in diverse developmental roles such as differentiation, cell-cell recognition, embryogenesis and programmed cell death. This is Lysine-rich arabinogalactan protein 18 (AGP18) from Arabidopsis thaliana (Mouse-ear cress).